A 548-amino-acid chain; its full sequence is T-complex protein 1 subunit theta (548 aa).

The residue at position 2 (alanine 2) is an N-acetylalanine. The residue at position 23 (serine 23) is a Phosphoserine. Phosphotyrosine is present on tyrosine 30. ADP contacts are provided by tyrosine 47 and glycine 48. Mg(2+) is bound at residue aspartate 99. The ADP site is built by glycine 100, threonine 101, asparagine 102, and phenylalanine 103. ATP-binding residues include glycine 100, threonine 101, and asparagine 102. At serine 162 the chain carries Phosphoserine. ADP is bound by residues methionine 169, serine 170, and lysine 171. 2 residues coordinate ATP: serine 170 and lysine 171. Glycyl lysine isopeptide (Lys-Gly) (interchain with G-Cter in SUMO2) cross-links involve residues lysine 224, lysine 254, and lysine 260. Phosphoserine is present on residues serine 269 and serine 317. Residues lysine 318 and lysine 400 each carry the N6-acetyllysine modification. Glycine 412 contributes to the ADP binding site. Residue glycine 412 participates in ATP binding. A Glycyl lysine isopeptide (Lys-Gly) (interchain with G-Cter in SUMO1) cross-link involves residue lysine 459. N6-acetyllysine is present on lysine 466. Aspartate 499 is an ADP binding site. ATP contacts are provided by aspartate 499 and lysine 504. Tyrosine 505 carries the phosphotyrosine modification. The segment at 529–548 (PAGGPKPPSGKKDWDEDQND) is disordered. Lysine 534 is covalently cross-linked (Glycyl lysine isopeptide (Lys-Gly) (interchain with G-Cter in SUMO2)). Serine 537 is modified (phosphoserine). Lysine 539 participates in a covalent cross-link: Glycyl lysine isopeptide (Lys-Gly) (interchain with G-Cter in SUMO2).

Belongs to the TCP-1 chaperonin family. Component of the chaperonin-containing T-complex (TRiC), a hexadecamer composed of two identical back-to-back stacked rings enclosing a protein folding chamber. Each ring is made up of eight different subunits: TCP1/CCT1, CCT2, CCT3, CCT4, CCT5, CCT6A/CCT6, CCT7, CCT8. Interacts with PACRG. Interacts with DNAAF4. Interacts with synaptic plasticity regulator PANTS.

It localises to the cytoplasm. The protein resides in the cytoskeleton. The protein localises to the microtubule organizing center. It is found in the centrosome. Its subcellular location is the cilium basal body. It catalyses the reaction ATP + H2O = ADP + phosphate + H(+). Functionally, component of the chaperonin-containing T-complex (TRiC), a molecular chaperone complex that assists the folding of actin, tubulin and other proteins upon ATP hydrolysis. The TRiC complex mediates the folding of WRAP53/TCAB1, thereby regulating telomere maintenance. As part of the TRiC complex may play a role in the assembly of BBSome, a complex involved in ciliogenesis regulating transports vesicles to the cilia. The chain is T-complex protein 1 subunit theta (CCT8) from Bos taurus (Bovine).